Reading from the N-terminus, the 552-residue chain is Indole-3-pyruvate decarboxylase (552 aa).

Residue Glu-52 coordinates thiamine diphosphate. Residues 385 to 466 (TSAFGAIDLR…ILVLNNEGYT (82 aa)) are thiamine pyrophosphate binding. Positions 435 and 462 each coordinate Mg(2+).

This sequence belongs to the TPP enzyme family. In terms of assembly, homotetramer. The cofactor is a metal cation. Thiamine diphosphate serves as cofactor.

The enzyme catalyses indole-3-pyruvate + H(+) = indole-3-acetaldehyde + CO2. Its pathway is plant hormone metabolism; auxin biosynthesis. This is Indole-3-pyruvate decarboxylase (ipdC) from Enterobacter cloacae.